Reading from the N-terminus, the 718-residue chain is Ribosomal RNA large subunit methyltransferase K/L (718 aa).

Residues 44–155 (DAYKVCIYSY…KQFVNVFLCL (112 aa)) form the THUMP domain.

This sequence belongs to the methyltransferase superfamily. RlmKL family.

It localises to the cytoplasm. It carries out the reaction guanosine(2445) in 23S rRNA + S-adenosyl-L-methionine = N(2)-methylguanosine(2445) in 23S rRNA + S-adenosyl-L-homocysteine + H(+). The catalysed reaction is guanosine(2069) in 23S rRNA + S-adenosyl-L-methionine = N(2)-methylguanosine(2069) in 23S rRNA + S-adenosyl-L-homocysteine + H(+). In terms of biological role, specifically methylates the guanine in position 2445 (m2G2445) and the guanine in position 2069 (m7G2069) of 23S rRNA. The polypeptide is Ribosomal RNA large subunit methyltransferase K/L (Francisella tularensis subsp. novicida (strain U112)).